A 548-amino-acid polypeptide reads, in one-letter code: Chaperonin GroEL 2 (548 aa).

ATP is bound by residues 30-33, Lys-51, 87-91, Gly-415, and Asp-496; these read TLGP and DGTTT. Residues 529 to 548 form a disordered region; the sequence is KDAMPSPDMGGMGGMGGMGF. A compositionally biased stretch (gly residues) spans 538 to 548; the sequence is GGMGGMGGMGF.

It belongs to the chaperonin (HSP60) family. In terms of assembly, forms a cylinder of 14 subunits composed of two heptameric rings stacked back-to-back. Interacts with the co-chaperonin GroES.

The protein resides in the cytoplasm. The enzyme catalyses ATP + H2O + a folded polypeptide = ADP + phosphate + an unfolded polypeptide.. Functionally, together with its co-chaperonin GroES, plays an essential role in assisting protein folding. The GroEL-GroES system forms a nano-cage that allows encapsulation of the non-native substrate proteins and provides a physical environment optimized to promote and accelerate protein folding. This chain is Chaperonin GroEL 2, found in Rhodospirillum rubrum (strain ATCC 11170 / ATH 1.1.1 / DSM 467 / LMG 4362 / NCIMB 8255 / S1).